Reading from the N-terminus, the 1512-residue chain is Mitogen-activated protein kinase kinase kinase 1 (1512 aa).

The segment covering 1-13 has biased composition (low complexity); sequence MAAAAGNRASSSG. 3 disordered regions span residues 1–37, 67–181, and 213–304; these read MAAA…SSAP, SVEL…DRPE, and VKPI…PEET. The residue at position 2 (Ala2) is an N-acetylalanine. Ser21 and Ser35 each carry phosphoserine. 3 stretches are compositionally biased toward low complexity: residues 81–99, 129–142, and 150–160; these read AASP…ADAA, AAPD…AAAE, and AAEPSPAAAPA. Phosphoserine occurs at positions 137 and 154. Over residues 162–181 the composition is skewed to basic and acidic residues; sequence REMENKETLKGLHKMDDRPE. Over residues 250–260 the composition is skewed to low complexity; it reads SPSPGNSPSGR. Position 275 is a phosphoserine (Ser275). Thr285 is subject to Phosphothreonine. Phosphoserine is present on residues Ser292, Ser297, and Ser300. The SWIM-type zinc-finger motif lies at 338–366; that stretch reads YRVFIGPQNCSCARGTFCIHLLFVMLRVF. Residues 416–433 are compositionally biased toward low complexity; sequence SNSHTLSSSSTSTSSSEN. Residues 416-436 form a disordered region; sequence SNSHTLSSSSTSTSSSENSIK. The segment at 443–492 adopts an RING-type zinc-finger fold; the sequence is CPICLLGMLDEESLTVCEDGCRNKLHHHCMSIWAEECRRNREPLICPLCR. 2 positions are modified to phosphoserine: Ser507 and Ser531. 2 disordered regions span residues 511–532 and 602–624; these read SPSS…AGSR and STGN…GSSQ. The segment covering 611–624 has biased composition (low complexity); it reads GSSPSGGATSGSSQ. At Ser923 the chain carries Phosphoserine. Residues 933-972 are disordered; the sequence is SISVGPSSSTTTTTTTTEQPKPMVQTKGRPHSQCLNSSPL. The segment covering 939–949 has biased composition (low complexity); the sequence is SSSTTTTTTTT. Ser1018 bears the Phosphoserine mark. Basic and acidic residues predominate over residues 1032-1041; it reads NCPENKDSDK. A disordered region spans residues 1032–1087; the sequence is NCPENKDSDKLSPVFTQSRPLPSSNIHRPKPSRPTPGNTSKQGDPSKNSMTLDLNS. Ser1043 is modified (phosphoserine). Polar residues-rich tracts occupy residues 1045–1057 and 1066–1087; these read VFTQ…SSNI and TPGN…DLNS. The 266-residue stretch at 1243-1508 folds into the Protein kinase domain; it reads WLKGQQIGLG…SRELLKHPVF (266 aa). Residues 1249-1257 and Lys1272 each bind ATP; that span reads IGLGAFSSC. Catalysis depends on Asp1369, which acts as the Proton acceptor. Residues Thr1400 and Thr1412 each carry the phosphothreonine; by autocatalysis modification.

This sequence belongs to the protein kinase superfamily. STE Ser/Thr protein kinase family. MAP kinase kinase kinase subfamily. Binds both upstream activators and downstream substrates in multimolecular complexes through its N-terminus. Oligomerizes after binding MAP2K4 or TRAF2. Interacts with AXIN1. Interacts (via the kinase catalytic domain) with STK38. Interacts with GRIPAP1. Requires Mg(2+) as cofactor. Post-translationally, autophosphorylated.

The enzyme catalyses L-seryl-[protein] + ATP = O-phospho-L-seryl-[protein] + ADP + H(+). It carries out the reaction L-threonyl-[protein] + ATP = O-phospho-L-threonyl-[protein] + ADP + H(+). The catalysed reaction is S-ubiquitinyl-[E2 ubiquitin-conjugating enzyme]-L-cysteine + [acceptor protein]-L-lysine = [E2 ubiquitin-conjugating enzyme]-L-cysteine + N(6)-ubiquitinyl-[acceptor protein]-L-lysine.. Its activity is regulated as follows. Activated by autophosphorylation on Thr-1400 and Thr-1412 following oligomerization. In terms of biological role, component of a protein kinase signal transduction cascade. Activates the ERK and JNK kinase pathways by phosphorylation of MAP2K1 and MAP2K4. May phosphorylate the MAPK8/JNK1 kinase. Activates CHUK and IKBKB, the central protein kinases of the NF-kappa-B pathway. The polypeptide is Mitogen-activated protein kinase kinase kinase 1 (MAP3K1) (Homo sapiens (Human)).